The primary structure comprises 327 residues: Microtubule-associated protein RP/EB family member 2 (327 aa).

Residues 1-21 (MPGPTQTLSPNGENNNDIIQD) form a disordered region. Pro2 carries the N-acetylalanine modification. At Ser9 the chain carries Phosphoserine. Residues 57–159 (TMSRHDIIAW…FIQWFKKFYD (103 aa)) enclose the Calponin-homology (CH) domain. Tyr167 carries the phosphotyrosine modification. Disordered regions lie at residues 171–240 (EARQ…DKDL) and 299–327 (ASEE…QEEY). A DCTN1-binding region spans residues 187–327 (QIFNLPKKSH…EQQPPQQEEY (141 aa)). Positions 200 to 234 (SPTAGAAKSSPAAKPGSTPSRPSSAKRASSSGSAS) are enriched in low complexity. Ser219 and Ser236 each carry phosphoserine. Residues 236-306 (SDKDLETQVI…LYASEEHEGH (71 aa)) form the EB1 C-terminal domain. Positions 259 to 302 (EGVEKERDFYFGKLREIELLCQEHGQENDDLVQRLMDILYASEE) are APC-binding. Positions 300–317 (SEEHEGHTEEPEAEEQAH) are enriched in basic and acidic residues. Residues 318–327 (EQQPPQQEEY) show a composition bias toward low complexity.

The protein belongs to the MAPRE family. Interacts with DCTN1. Interacts with APC (via C-terminal). Interacts with monomeric and polymerized tubulin. Interacts with SLAIN1. Interacts (via the N-terminal region) with BAG1. Interacts with ASB14. Interacts with HAX1; this interaction is essential for epidermal cell migration. Phosphorylated at Ser-236 by CK2 leading to enhanced cell adhesion. Phosphorylated by CDK1 and AURKB during mitosis reduces the binding affinity of MAPRE2 for microtubules. Post-translationally, ubiquitinated in an ASB14-dependent manner; leading to proteasomal degradation. As to expression, expressed in different tumor cell lines. Up-regulated in activated B- and T-lymphocytes.

It localises to the cytoplasm. It is found in the cytoskeleton. In terms of biological role, adapter protein that is involved in microtubule polymerization, and spindle function by stabilizing microtubules and anchoring them at centrosomes. Therefore, ensures mitotic progression and genome stability. Acts as a central regulator of microtubule reorganization in apico-basal epithelial differentiation. Plays a role during oocyte meiosis by regulating microtubule dynamics. Participates in neurite growth by interacting with plexin B3/PLXNB3 and microtubule reorganization during apico-basal epithelial differentiation. Also plays an essential role for cell migration and focal adhesion dynamics. Mechanistically, recruits HAX1 to microtubules in order to regulate focal adhesion dynamics. In Homo sapiens (Human), this protein is Microtubule-associated protein RP/EB family member 2 (MAPRE2).